We begin with the raw amino-acid sequence, 380 residues long: S-adenosylmethionine synthase (380 aa).

ATP is bound at residue His15. Asp17 contacts Mg(2+). Residue Glu43 coordinates K(+). Residues Glu56 and Gln99 each contribute to the L-methionine site. Residues 99-109 (QSPDIAMGIDN) form a flexible loop region. ATP-binding positions include 164 to 166 (DAK), 230 to 231 (RF), Asp239, 245 to 246 (RK), and Lys266. Residue Asp239 coordinates L-methionine. Lys270 serves as a coordination point for L-methionine.

The protein belongs to the AdoMet synthase family. Homotetramer; dimer of dimers. Mg(2+) serves as cofactor. Requires K(+) as cofactor.

The protein resides in the cytoplasm. The enzyme catalyses L-methionine + ATP + H2O = S-adenosyl-L-methionine + phosphate + diphosphate. It participates in amino-acid biosynthesis; S-adenosyl-L-methionine biosynthesis; S-adenosyl-L-methionine from L-methionine: step 1/1. Functionally, catalyzes the formation of S-adenosylmethionine (AdoMet) from methionine and ATP. The overall synthetic reaction is composed of two sequential steps, AdoMet formation and the subsequent tripolyphosphate hydrolysis which occurs prior to release of AdoMet from the enzyme. This Rickettsia prowazekii (strain Madrid E) protein is S-adenosylmethionine synthase.